We begin with the raw amino-acid sequence, 85 residues long: Beta-insect depressant toxin Lqh-dprIT3c (85 aa).

The signal sequence occupies residues 1-21 (MKLLLLLTISASMLIEGLVNA). Residues 22-82 (DGYIRGGDGC…EWDYETNTCG (61 aa)) enclose the LCN-type CS-alpha/beta domain. Disulfide bonds link cysteine 31/cysteine 81, cysteine 35/cysteine 56, cysteine 42/cysteine 63, and cysteine 46/cysteine 65. A Glycine amide modification is found at glycine 82.

The protein belongs to the long (4 C-C) scorpion toxin superfamily. Sodium channel inhibitor family. Beta subfamily. Expressed by the venom gland.

It is found in the secreted. Its function is as follows. Depressant insect beta-toxins cause a transient contraction paralysis followed by a slow flaccid paralysis. They bind voltage-independently at site-4 of sodium channels (Nav) and block action potentials, primarily by depolarizing the axonal membrane and suppressing the sodium current. This depressant toxin is active only on insects. It is found in a relatively small amount in the venom, and its activity on insects is 10-fold higher compared to other known depressant toxins. This Leiurus hebraeus (Hebrew deathstalker scorpion) protein is Beta-insect depressant toxin Lqh-dprIT3c.